The following is a 389-amino-acid chain: MARKDTNKQYSLRKLKTGTASVAVAVAVLGAGFANQTEVKAAEKKVEAKVEVAENNVSSVARREKELYDQIADLTDKNGEYLERIGELEERQKNLEKLEHQSQVAADKHYQEQAKKHQEYKQEQEERQKNQEQLERKYQREVEKRYQEQLQKQQQLETEKQISEASRKSLSRDLEASREAKKKVEADLAALTAEHQKLKEEKQISDASRQGLSRDLEASREAKKKVEADLAALTAEHQKLKEEKQISDASRQGLSRDLEASREAKKKVEADLAEANSKLQALEKLNKELEEGKKLSEKEKAELQARLEAEAKALKEQLAKQAEELAKLKGNQTPNAKVAPQANRSRSAMTQQKRTLPSTGETANPFFTAAAATVMVSAGMLALKRKEEN.

Residues 1-41 form the signal peptide; the sequence is MARKDTNKQYSLRKLKTGTASVAVAVAVLGAGFANQTEVKA. The stretch at 89 to 99 is one A-1 repeat; that stretch reads EERQKNLEKLE. Positions 89–135 are 2 X repeats, type A; it reads EERQKNLEKLEHQSQVAADKHYQEQAKKHQEYKQEQEERQKNQEQLE. 6 stretches are compositionally biased toward basic and acidic residues: residues 93–147, 157–182, 194–204, 212–224, 236–246, and 254–270; these read KNLE…KRYQ, ETEK…EAKK, EHQKLKEEKQI, LSRD…EAKK, and LSRD…KVEA. Disordered regions lie at residues 93–182, 194–224, and 236–271; these read KNLE…EAKK, EHQK…EAKK, and EHQK…VEAD. Residues 125–135 form an A-2 repeat; that stretch reads EERQKNQEQLE. C repeat units lie at residues 154 to 188, 196 to 230, and 238 to 272; these read QQLE…EADL and QKLK…EADL. 4 D repeats span residues 305–310, 311–316, 319–324, and 326–331; these read ARLEAE, AKALKE, AKQAEE, and AKLKGN. Residues 326–362 are disordered; the sequence is AKLKGNQTPNAKVAPQANRSRSAMTQQKRTLPSTGET. The span at 342 to 362 shows a compositional bias: polar residues; it reads ANRSRSAMTQQKRTLPSTGET. The short motif at 356–360 is the LPXTG sorting signal element; sequence LPSTG. Position 359 is a pentaglycyl murein peptidoglycan amidated threonine (threonine 359). Residues 360-389 constitute a propeptide, removed by sortase; that stretch reads GETANPFFTAAAATVMVSAGMLALKRKEEN.

The protein belongs to the M protein family. In terms of assembly, homodimer.

The protein resides in the secreted. It is found in the cell wall. This protein is one of the different antigenic serotypes of protein M. Protein M is closely associated with virulence of the bacterium and can render the organism resistant to phagocytosis. This Streptococcus pyogenes serotype M49 protein is M protein, serotype 49 (emm49).